A 379-amino-acid chain; its full sequence is Transcription termination factor 1a, mitochondrial (379 aa).

The N-terminal 37 residues, 1 to 37 (MASRNIWCVRRNFLFDLRDWMLQYSAEVFLKSISFRP), are a transit peptide targeting the mitochondrion. Interaction with DNA regions lie at residues 151 to 152 (RS), 229 to 233 (QSTKR), 306 to 313 (SEKKFNDK), 337 to 340 (SINT), and 366 to 373 (SQRRYEAK).

This sequence belongs to the mTERF family. In terms of assembly, monomer. Post-translationally, phosphoprotein with mostly four phosphate groups. While the DNA-binding activity is unaffected by the phosphorylation state, only the phosphorylated form of the protein is active for termination activity. Functioning seems to be regulated by phosphorylation. In terms of tissue distribution, predominantly expressed in heart and liver, with extremely low levels in other tissues. Expressed strongly in the heart and at lower levels in brain, liver and kidney.

It localises to the mitochondrion. Its function is as follows. Transcription termination factor. Binds to a 28 bp region within the tRNA(Leu(uur)) gene at a position immediately adjacent to and downstream of the 16S rRNA gene; this region comprises a tridecamer sequence critical for directing accurate termination. Binds DNA along the major grove and promotes DNA bending and partial unwinding. Promotes base flipping. Transcription termination activity appears to be polarized with highest specificity for transcripts initiated on the light strand. This is Transcription termination factor 1a, mitochondrial (Mterf1a) from Mus musculus (Mouse).